The primary structure comprises 247 residues: 2,3-bisphosphoglycerate-dependent phosphoglycerate mutase (247 aa).

Substrate contacts are provided by residues 8–15 (RHGESTWN), 21–22 (TG), arginine 60, 87–90 (ERHY), lysine 98, 114–115 (RR), and 183–184 (GN). Catalysis depends on histidine 9, which acts as the Tele-phosphohistidine intermediate. The active-site Proton donor/acceptor is the glutamate 87.

Belongs to the phosphoglycerate mutase family. BPG-dependent PGAM subfamily. As to quaternary structure, homodimer.

It carries out the reaction (2R)-2-phosphoglycerate = (2R)-3-phosphoglycerate. It participates in carbohydrate degradation; glycolysis; pyruvate from D-glyceraldehyde 3-phosphate: step 3/5. In terms of biological role, catalyzes the interconversion of 2-phosphoglycerate and 3-phosphoglycerate. The protein is 2,3-bisphosphoglycerate-dependent phosphoglycerate mutase of Acidovorax ebreus (strain TPSY) (Diaphorobacter sp. (strain TPSY)).